The following is a 262-amino-acid chain: tRNA (guanine-N(1)-)-methyltransferase (262 aa).

Residues G112 and 132-137 contribute to the S-adenosyl-L-methionine site; that span reads IGDYIL.

This sequence belongs to the RNA methyltransferase TrmD family. Homodimer.

It is found in the cytoplasm. The catalysed reaction is guanosine(37) in tRNA + S-adenosyl-L-methionine = N(1)-methylguanosine(37) in tRNA + S-adenosyl-L-homocysteine + H(+). In terms of biological role, specifically methylates guanosine-37 in various tRNAs. This is tRNA (guanine-N(1)-)-methyltransferase from Desulfatibacillum aliphaticivorans.